The chain runs to 759 residues: Nucleolar RNA helicase 2-A (759 aa).

Residues 1–154 (MPVKVYAEEM…KKRKTDTTEI (154 aa)) form a disordered region. A compositionally biased stretch (acidic residues) spans 77-86 (ETAEECDGEQ). The Q motif motif lies at 179 to 207 (GDFSKFPLSKETIKNLQAKGVSYLFPIQS). Residues 210 to 389 (FHTAYSGKDV…KKYMRKQFEK (180 aa)) form the Helicase ATP-binding domain. Position 223 to 230 (223 to 230 (ARTGTGKT)) interacts with ATP. The short motif at 332–335 (DEVD) is the DEAD box element. The 145-residue stretch at 422-566 (DLVQVYSGSH…VGVPSLLNVA (145 aa)) folds into the Helicase C-terminal domain. Residues 709–759 (QESERNFDGPRNRGFGGRGRRPFDRRNNSRNSNRGGGGRGRNRNGGFRRGR) form a disordered region. The segment covering 710 to 719 (ESERNFDGPR) has biased composition (basic and acidic residues). A compositionally biased stretch (basic residues) spans 748 to 759 (GRNRNGGFRRGR).

It belongs to the DEAD box helicase family. DDX21/DDX50 subfamily. As to expression, widely expressed. Expressed at higher level in stomach. Expressed at higher level compared to ddx21-b.

Its subcellular location is the nucleus. The protein localises to the nucleolus. It localises to the nucleoplasm. It is found in the cytoplasm. The protein resides in the cytosol. Its subcellular location is the mitochondrion. The catalysed reaction is ATP + H2O = ADP + phosphate + H(+). Its function is as follows. RNA helicase that acts as a sensor of the transcriptional status of both RNA polymerase (Pol) I and II: promotes ribosomal RNA (rRNA) processing and transcription from polymerase II (Pol II). Binds various RNAs, such as rRNAs, snoRNAs, 7SK and, at lower extent, mRNAs. In the nucleolus, localizes to rDNA locus, where it directly binds rRNAs and snoRNAs, and promotes rRNA transcription, processing and modification. Required for rRNA 2'-O-methylation, possibly by promoting the recruitment of late-acting snoRNAs SNORD56 and SNORD58 with pre-ribosomal complexes. In the nucleoplasm, binds 7SK RNA and is recruited to the promoters of Pol II-transcribed genes: acts by facilitating the release of P-TEFb from inhibitory 7SK snRNP in a manner that is dependent on its helicase activity, thereby promoting transcription of its target genes. Required to prevent R-loop-associated DNA damage and transcription-associated genomic instability. In Xenopus laevis (African clawed frog), this protein is Nucleolar RNA helicase 2-A (ddx21-a).